Consider the following 434-residue polypeptide: Enolase (434 aa).

Substrate-binding residues include His-158 and Glu-167. Catalysis depends on Glu-210, which acts as the Proton donor. Mg(2+) contacts are provided by Asp-245, Glu-294, and Asp-319. Substrate is bound by residues Glu-294 and Asp-319. The active-site Proton acceptor is Lys-344. Substrate is bound by residues 371–374 (SHRS) and Lys-395.

This sequence belongs to the enolase family. As to quaternary structure, homodimer. Mg(2+) serves as cofactor.

It localises to the cytoplasm. It carries out the reaction (2R)-2-phosphoglycerate = phosphoenolpyruvate + H2O. The protein operates within carbohydrate degradation; glycolysis; pyruvate from D-glyceraldehyde 3-phosphate: step 4/5. The protein is Enolase of Caenorhabditis elegans.